The chain runs to 132 residues: Small ribosomal subunit protein uS8 (132 aa).

The protein belongs to the universal ribosomal protein uS8 family. Part of the 30S ribosomal subunit. Contacts proteins S5 and S12.

In terms of biological role, one of the primary rRNA binding proteins, it binds directly to 16S rRNA central domain where it helps coordinate assembly of the platform of the 30S subunit. This Rickettsia conorii (strain ATCC VR-613 / Malish 7) protein is Small ribosomal subunit protein uS8.